The chain runs to 665 residues: Anaphase-promoting complex subunit 3 (665 aa).

The stretch at 115-148 (SCMLDVLGTMYKKAGFLKKATDCFVEAVSINPYN) is one TPR 1 repeat. A DNA-binding region spans residues 191 to 257 (VPEPSFLKKS…HQSLKLQSQS (67 aa)). TPR repeat units follow at residues 329–362 (LLKLFGKGVYLLAQYKLREALNCFQSLPIEQQNT), 363–396 (PFVLAKLGITYFELVDYEKSEEVFQKLRDLSPSR), 431–464 (PESWCILANCFSLQREHSQALKCINRAIQLDPTF), 466–498 (YAYTLQGHEHSANEEYEKSKTSFRKAIRVNVRH), 499–532 (YNAWYGLGMVYLKTGRNDQADFHFQRAAEINPNN), 534–566 (VLITCIGMIYERCKDYKKALDFYDRACKLDEKS), 568–600 (LARFKKAKVLILLHDHDKALVELEQLKAIAPDE), and 601–634 (ANVHFLLGKIFKQMRKKNLALKHFTIAWNLDGKA).

The protein belongs to the APC3/CDC27 family. As to quaternary structure, the APC/C is composed of at least 13 subunits: apc1, apc2, nuc2, apc4, apc5, cut9, apc8, apc10, apc11, hcn1, apc13, apc14 and apc15. Interacts with apc10 and cut9.

It is found in the nucleus. Its function is as follows. Component of the anaphase-promoting complex/cyclosome (APC/C), a cell cycle-regulated E3 ubiquitin-protein ligase complex that controls progression through mitosis and the G1 phase of the cell cycle. The APC/C is thought to confer substrate specificity and, in the presence of ubiquitin-conjugating E2 enzymes, it catalyzes the formation of protein-ubiquitin conjugates that are subsequently degraded by the 26S proteasome. Interacts with spindle apparatus, chromosomes, or nuclear envelope, and interconnect nuclear and cytoskeletal functions in mitosis, so the elongation of the spindle in anaphase is blocked. This is Anaphase-promoting complex subunit 3 (nuc2) from Schizosaccharomyces pombe (strain 972 / ATCC 24843) (Fission yeast).